Here is a 371-residue protein sequence, read N- to C-terminus: Liposome tubulation protein MamY (371 aa).

Residues 1–18 (MLMNFVNNVSKTINGGAR) are Cytoplasmic-facing. A helical membrane pass occupies residues 19 to 39 (IVYVGSFSWAVLSLLFVTAFS). The Lumenal portion of the chain corresponds to 40–51 (GWNNIFSMLPHE). A helical membrane pass occupies residues 52-72 (IFILVLTISLPIALIVLIFML). At 73–371 (SQIVRTVESV…LIDGTPISDA (299 aa)) the chain is on the cytoplasmic side.

This sequence belongs to the magnetosome MamY family. In terms of assembly, probably interacts with MamX and MamZ proteins.

It is found in the magnetosome membrane. May be involved in constriction of the cell inner membrane to form mature magnetosomes. Binds cardiolipin and liposomes. May function with MamX, MamZ amd Mms6 in biomineralization. The protein is Liposome tubulation protein MamY of Magnetospirillum gryphiswaldense (strain DSM 6361 / JCM 21280 / NBRC 15271 / MSR-1).